The sequence spans 569 residues: GATOR1 complex protein NPRL3 (569 aa).

Disordered stretches follow at residues Pro27–Gly60 and Pro416–Pro477. 2 stretches are compositionally biased toward polar residues: residues His34 to Gly52 and Ser438 to Ala468. Ser476 is modified (phosphoserine).

This sequence belongs to the NPR3 family. As to quaternary structure, within the GATOR complex, component of the GATOR1 subcomplex, made of DEPDC5, NPRL2 and NPRL3. GATOR1 mediates the strong interaction of the GATOR complex with small GTPases Rag (RagA/RRAGA, RagB/RRAGB, RagC/RRAGC and/or RagD/RRAGD) heterodimers. GATOR1 interacts with GPR155/LYCHOS; interaction takes place in presence of cholesterol and prevents interaction between GATOR1 and KICSTOR. In terms of tissue distribution, widely expressed. Expressed in the frontal lobe cortex as well as in the temporal, parietal, and occipital lobes.

Its subcellular location is the lysosome membrane. Its function is as follows. As a component of the GATOR1 complex functions as an inhibitor of the amino acid-sensing branch of the mTORC1 pathway. In response to amino acid depletion, the GATOR1 complex has GTPase activating protein (GAP) activity and strongly increases GTP hydrolysis by RagA/RRAGA (or RagB/RRAGB) within heterodimeric Rag complexes, thereby turning them into their inactive GDP-bound form, releasing mTORC1 from lysosomal surface and inhibiting mTORC1 signaling. In the presence of abundant amino acids, the GATOR1 complex is negatively regulated by GATOR2, the other GATOR subcomplex, in this amino acid-sensing branch of the TORC1 pathway. The polypeptide is GATOR1 complex protein NPRL3 (Homo sapiens (Human)).